The sequence spans 414 residues: HERV-H LTR-associating protein 2 (414 aa).

Positions 1 to 22 (MKAQTALSFFLILITSLSGSQG) are cleaved as a signal peptide. One can recognise an Ig-like V-type 1 domain in the interval 61 to 131 (IHWKYQDSYK…YVGTAIQVIT (71 aa)). 2 N-linked (GlcNAc...) asparagine glycosylation sites follow: asparagine 90 and asparagine 103. Residues 138 to 222 (VGVFLTPVMK…ENSLLKQTWT (85 aa)) form the Ig-like C1-type domain. 2 disulfides stabilise this stretch: cysteine 159–cysteine 210 and cysteine 243–cysteine 317. In terms of domain architecture, Ig-like V-type 2 spans 235 to 328 (QSEHVSLSCQ…ISSDEYTLLT (94 aa)). Asparagine 318 carries N-linked (GlcNAc...) asparagine glycosylation. Residues 345–365 (KGLWILVPSAILAAFLLIWSV) traverse the membrane as a helical segment. Residues 383–414 (GAQQERCCVPPGERCPSAPDNGEENVPLSGKV) are disordered.

Interacts with TMIGD2. As to expression, expressed at high levels in colon, kidney, testis, lung and pancreas, and at lower levels in small intestine, liver and skeletal muscle. In immune cells, highly expressed in B-cells, dendritic cells and macrophages. Not detected in T-cells.

It is found in the membrane. In terms of biological role, through interaction with TMIGD2, costimulates T-cells in the context of TCR-mediated activation. Enhances T-cell proliferation and cytokine production via an AKT-dependent signaling cascade. This Homo sapiens (Human) protein is HERV-H LTR-associating protein 2 (HHLA2).